A 185-amino-acid chain; its full sequence is Elongation factor P (185 aa).

It belongs to the elongation factor P family.

The protein localises to the cytoplasm. Its pathway is protein biosynthesis; polypeptide chain elongation. Its function is as follows. Involved in peptide bond synthesis. Stimulates efficient translation and peptide-bond synthesis on native or reconstituted 70S ribosomes in vitro. Probably functions indirectly by altering the affinity of the ribosome for aminoacyl-tRNA, thus increasing their reactivity as acceptors for peptidyl transferase. The polypeptide is Elongation factor P (Listeria innocua serovar 6a (strain ATCC BAA-680 / CLIP 11262)).